A 142-amino-acid polypeptide reads, in one-letter code: MESMGNNSPGPEIRALARNIRMSAHKARRVINQIRGRSYGQALMILELMPYGACYPISQLIHSAAANANHNMGLNKANLLVGRVEVNEGAVFKRIQPRAQGRGYPIQKPTCHITIVSEEISRSNDPIMSIESRKKGYVWRRK.

This sequence belongs to the universal ribosomal protein uL22 family. As to quaternary structure, part of the 50S ribosomal subunit.

The protein localises to the plastid. Its subcellular location is the chloroplast. Functionally, this protein binds specifically to 23S rRNA. Its function is as follows. The globular domain of the protein is located near the polypeptide exit tunnel on the outside of the subunit, while an extended beta-hairpin is found that lines the wall of the exit tunnel in the center of the 70S ribosome. This is Large ribosomal subunit protein uL22c (rpl22) from Pinus thunbergii (Japanese black pine).